A 438-amino-acid chain; its full sequence is Protein ROOT INITIATION DEFECTIVE 3 (438 aa).

6 WD repeats span residues 36-74 (AHGLTAVGEKFLASSQLSARNTSGSIFYWSWTKPQAEVK), 76-115 (YPVEPIKALAANNEGTYLVGGGISGDIYLWEVATGKLLKK), 118-157 (GHYRSVTCLVFSGDDSLLVSGSQDGSIRVWSLIRLFDDFQ), 171-212 (EHTM…LLKN), 214-253 (IFPSVINALALDPGGCVFYAGARDSKIYIGAINATSEYGT), and 261-300 (EKGKAITCLAYCADGNLLISGSEDGVVCVWDPKSLRHVRT). Residues 394-434 (AATEMEMERLKLEYKRSLQMNEQWQKNYENLLQVVMEEEQI) adopt a coiled-coil conformation.

Involved in meristem development. Acts as a negative regulator of the CUC-STM pathway in shoot apical meristem (SAM) neo-formation. This Arabidopsis thaliana (Mouse-ear cress) protein is Protein ROOT INITIATION DEFECTIVE 3 (RID3).